We begin with the raw amino-acid sequence, 183 residues long: ATP synthase subunit b, chloroplastic (183 aa).

A helical transmembrane segment spans residues 27 to 49; sequence LATNLINLTVVVGVLIFFGKGVL.

It belongs to the ATPase B chain family. As to quaternary structure, F-type ATPases have 2 components, F(1) - the catalytic core - and F(0) - the membrane proton channel. F(1) has five subunits: alpha(3), beta(3), gamma(1), delta(1), epsilon(1). F(0) has four main subunits: a(1), b(1), b'(1) and c(10-14). The alpha and beta chains form an alternating ring which encloses part of the gamma chain. F(1) is attached to F(0) by a central stalk formed by the gamma and epsilon chains, while a peripheral stalk is formed by the delta, b and b' chains.

It is found in the plastid. It localises to the chloroplast thylakoid membrane. F(1)F(0) ATP synthase produces ATP from ADP in the presence of a proton or sodium gradient. F-type ATPases consist of two structural domains, F(1) containing the extramembraneous catalytic core and F(0) containing the membrane proton channel, linked together by a central stalk and a peripheral stalk. During catalysis, ATP synthesis in the catalytic domain of F(1) is coupled via a rotary mechanism of the central stalk subunits to proton translocation. Its function is as follows. Component of the F(0) channel, it forms part of the peripheral stalk, linking F(1) to F(0). This is ATP synthase subunit b, chloroplastic from Hordeum vulgare (Barley).